We begin with the raw amino-acid sequence, 325 residues long: Pyruvate dehydrogenase E1 component subunit beta (325 aa).

E60 is a binding site for thiamine diphosphate.

As to quaternary structure, heterodimer of an alpha and a beta chain. It depends on thiamine diphosphate as a cofactor.

The catalysed reaction is N(6)-[(R)-lipoyl]-L-lysyl-[protein] + pyruvate + H(+) = N(6)-[(R)-S(8)-acetyldihydrolipoyl]-L-lysyl-[protein] + CO2. Its function is as follows. The pyruvate dehydrogenase complex catalyzes the overall conversion of pyruvate to acetyl-CoA and CO(2). It contains multiple copies of three enzymatic components: pyruvate dehydrogenase (E1), dihydrolipoamide acetyltransferase (E2) and lipoamide dehydrogenase (E3). The polypeptide is Pyruvate dehydrogenase E1 component subunit beta (pdhB) (Geobacillus stearothermophilus (Bacillus stearothermophilus)).